A 363-amino-acid polypeptide reads, in one-letter code: GTP-binding protein 1 (363 aa).

In terms of domain architecture, OBG-type G spans 63–287 (ARVAFIGFPS…LKERIWEELN (225 aa)). Residues 69 to 76 (GFPSVGKS), 115 to 119 (DLPGI), and 246 to 249 (KIDA) each bind GTP. One can recognise a TGS domain in the interval 287-362 (NLYRIYTKRK…EEGDVVTIVT (76 aa)).

The protein belongs to the TRAFAC class OBG-HflX-like GTPase superfamily. OBG GTPase family.

The protein is GTP-binding protein 1 (gtp1) of Schizosaccharomyces pombe (strain 972 / ATCC 24843) (Fission yeast).